A 458-amino-acid chain; its full sequence is UDP-N-acetylmuramoylalanine--D-glutamate ligase (458 aa).

Position 124 to 130 (124 to 130 (GSDGKTT)) interacts with ATP.

It belongs to the MurCDEF family.

The protein localises to the cytoplasm. It carries out the reaction UDP-N-acetyl-alpha-D-muramoyl-L-alanine + D-glutamate + ATP = UDP-N-acetyl-alpha-D-muramoyl-L-alanyl-D-glutamate + ADP + phosphate + H(+). Its pathway is cell wall biogenesis; peptidoglycan biosynthesis. Functionally, cell wall formation. Catalyzes the addition of glutamate to the nucleotide precursor UDP-N-acetylmuramoyl-L-alanine (UMA). This is UDP-N-acetylmuramoylalanine--D-glutamate ligase from Clostridium beijerinckii (strain ATCC 51743 / NCIMB 8052) (Clostridium acetobutylicum).